Consider the following 469-residue polypeptide: Cell division protein FtsP (469 aa).

Positions 1 to 29 (MPRLSRRQLLKTAAISTALSTVPAPLLAA) form a signal peptide, tat-type signal. The 59-residue stretch at 228–286 (IRLRLLNASLARAYDLRLDNDQEMLLIAQDLSFLPKAKSVKSLVLSPGERAEILVNMNE) folds into the Plastocyanin-like domain.

It belongs to the FtsP family. In terms of processing, predicted to be exported by the Tat system. The position of the signal peptide cleavage has not been experimentally proven.

It localises to the periplasm. Its function is as follows. Cell division protein that is required for growth during stress conditions. May be involved in protecting or stabilizing the divisomal assembly under conditions of stress. This chain is Cell division protein FtsP, found in Haemophilus influenzae (strain 86-028NP).